Reading from the N-terminus, the 294-residue chain is MSQLGSAVPSSNLPEGLPVSSLALLILVLIPCVLLLLLLNCLFVGYKLFRMTRRKRDRYGSEMSLMHSSYSTRQRITRFSDEPPVAPNRKTNYVSVSEPMLAPPITSSLTSSAERRATGQRAMFLRPDGATYAGSESLRVPHWRTSAPVLVQSSDSDMERVNTVPPNSPVLRVTPNGFSVPMTSLRRSSTMELESTSLDKIHVECESASIIPQENSCYVVSSSSSARGSGLDSDFGASAGVSLRILSMDSDGFPGSAWASALEWDYYDPSYVTQNHVPKHRPQAPPITTKQYWV.

Topologically, residues 1 to 23 are extracellular; it reads MSQLGSAVPSSNLPEGLPVSSLA. The chain crosses the membrane as a helical span at residues 24 to 44; sequence LLILVLIPCVLLLLLLNCLFV. Over 45 to 294 the chain is Cytoplasmic; it reads GYKLFRMTRR…PPITTKQYWV (250 aa). Residues 154-175 are disordered; the sequence is SDSDMERVNTVPPNSPVLRVTP. The VPPNSP motif signature appears at 164 to 169; that stretch reads VPPNSP. The SLRRSST motif motif lies at 184–190; sequence SLRRSST.

The protein belongs to the huluwa family. In terms of assembly, interacts with axin1; leading to promote the tankyrase-mediated degradation of axin. Interacts with axin2; leading to promote the tankyrase-mediated degradation of axin.

The protein resides in the cell membrane. Its function is as follows. Key maternal determinant of the dorsal organizer and body axis formation in vertebrates that acts by promoting stabilization of beta-catenin (ctnnb1). Localizes on the plasma membrane of the future dorsal blastomeres in early blastulas and binds to and promotes the tankyrase-mediated degradation of axin (axin1 and axin2). Axin degradation results in stabilization and nuclear translocation of beta-catenin (ctnnb1) for activating organizer-specific target gene expression. This is Protein huluwa from Danio rerio (Zebrafish).